A 231-amino-acid chain; its full sequence is Orotidine 5'-phosphate decarboxylase (231 aa).

Substrate is bound by residues D11, K34, 61–70 (DLKLHDIPNT), T117, R179, Q188, G208, and R209. Residue K63 is the Proton donor of the active site.

It belongs to the OMP decarboxylase family. Type 1 subfamily. As to quaternary structure, homodimer.

It carries out the reaction orotidine 5'-phosphate + H(+) = UMP + CO2. It functions in the pathway pyrimidine metabolism; UMP biosynthesis via de novo pathway; UMP from orotate: step 2/2. Functionally, catalyzes the decarboxylation of orotidine 5'-monophosphate (OMP) to uridine 5'-monophosphate (UMP). The protein is Orotidine 5'-phosphate decarboxylase of Streptococcus suis (strain 98HAH33).